The following is a 153-amino-acid chain: Endoribonuclease YbeY (153 aa).

Residues His-114, His-118, and His-124 each coordinate Zn(2+).

Belongs to the endoribonuclease YbeY family. Zn(2+) serves as cofactor.

The protein resides in the cytoplasm. Its function is as follows. Single strand-specific metallo-endoribonuclease involved in late-stage 70S ribosome quality control and in maturation of the 3' terminus of the 16S rRNA. The sequence is that of Endoribonuclease YbeY from Shewanella baltica (strain OS155 / ATCC BAA-1091).